A 424-amino-acid polypeptide reads, in one-letter code: Trigger factor (424 aa).

Residues 163–248 (GDTVVLDFEG…IHEIKAKELP (86 aa)) enclose the PPIase FKBP-type domain.

This sequence belongs to the FKBP-type PPIase family. Tig subfamily.

It is found in the cytoplasm. It catalyses the reaction [protein]-peptidylproline (omega=180) = [protein]-peptidylproline (omega=0). Functionally, involved in protein export. Acts as a chaperone by maintaining the newly synthesized protein in an open conformation. Functions as a peptidyl-prolyl cis-trans isomerase. The sequence is that of Trigger factor from Bacillus licheniformis (strain ATCC 14580 / DSM 13 / JCM 2505 / CCUG 7422 / NBRC 12200 / NCIMB 9375 / NCTC 10341 / NRRL NRS-1264 / Gibson 46).